Here is a 524-residue protein sequence, read N- to C-terminus: MLVETYDPFQHLAVSAFVAAIPILLLLLCLTVFKMQGIQAALLTLLVTFFIAGLVFHLPFGESIGSIVQGVVQGLWPIGYIIVMAVWLYKIAVASGKFAVLRGSIIGISRDQRIQLLLIGFCFNAFLEGAAGFGVPIAICAVLLVSLGFKPLQAAMLCLIANGASGAFGAIGIPVGIIDTLGLEGQVTSMDVSMMTALTLPMINFTIPFLLIWLMDSWKGIKEILPAILVTSSVYTVSQALITIFIGPELADIIPSLLTMGLLALFLKRWQPRNTFLLNGNGCESEHASLKDVIKAWSPFYLLTMFVFLWSLPAFKGLLAEGGALEFAKWAFVVPGSSIEVGVDFIGATGTAILLAAVTTVTTTKMIRMKESISLLKKVIVDFSIPIMMICAIIGIAKLMTYGGLTMALGEAVATTGAFFPFLSPILGWIGVFMTGSVVNNNTLFAPIQTTAGAIIGTNPSLLVAANTAGGVMAKLVSPQSIAIATAAVGETGNEAALTKMTLKYSFGLLVFVSVWTYILSLLF.

Transmembrane regions (helical) follow at residues 12–34 (LAVS…TVFK), 38–60 (IQAA…HLPF), 67–89 (IVQG…VWLY), 127–149 (LEGA…SLGF), 156–178 (MLCL…VGII), 193–215 (SMMT…IWLM), 224–246 (ILPA…TIFI), 250–267 (LADI…ALFL), 297–319 (WSPF…KGLL), 339–361 (IEVG…VTTV), 374–396 (SLLK…IIGI), 411–433 (EAVA…IGVF), and 505–522 (YSFG…ILSL).

This sequence belongs to the lactate permease family.

It localises to the cell membrane. May play a role in L-lactate transport. This chain is L-lactate permease (lctP), found in Halalkalibacterium halodurans (strain ATCC BAA-125 / DSM 18197 / FERM 7344 / JCM 9153 / C-125) (Bacillus halodurans).